A 443-amino-acid chain; its full sequence is Endothelin receptor type B (443 aa).

The first 26 residues, 1 to 26 (MQPLRSLCGRALVALIFACGVAGVQS), serve as a signal peptide directing secretion. At 27–102 (EERGFPPAGA…GPIEIKDTFK (76 aa)) the chain is on the extracellular side. A disordered region spans residues 53-89 (TFWPRGSNASLPRSSSPPQMPKGGRMAGPPARTLTPP). Residues 59–69 (SNASLPRSSSP) show a composition bias toward polar residues. Asn-60 is a glycosylation site (N-linked (GlcNAc...) asparagine). Residues 103-127 (YINTVVSCLVFVLGIIGNSTLLRII) form a helical membrane-spanning segment. The Cytoplasmic segment spans residues 128–138 (YKNKCMRNGPN). A helical membrane pass occupies residues 139–164 (ILIASLALGDLLHIIIDIPINVYKLL). Over 165–176 (AEDWPFGVEMCK) the chain is Extracellular. A disulfide bridge links Cys-175 with Cys-256. A helical membrane pass occupies residues 177–198 (LVPFIQKASVGITVLSLCALSI). The Cytoplasmic portion of the chain corresponds to 199–219 (DRYRAVASWSRIKGIGVPKWT). Residues 220–244 (AVEIVLIWVVSVVLAVPEALGFDMI) form a helical membrane-spanning segment. At 245 to 272 (TTDYKGNRLRICLLHPTQKTAFMQFYKT) the chain is on the extracellular side. Residues 273–297 (AKDWWLFSFYFCLPLAITAFFYTLM) form a helical membrane-spanning segment. Over 298 to 325 (TCEMLRKKSGMQIALNDHLKQRREVAKT) the chain is Cytoplasmic. Position 306 is a phosphoserine (Ser-306). Residues 326–351 (VFCLVLVFALCWLPLHLSRILKLTLY) form a helical membrane-spanning segment. Over 352–363 (DQNDSNRCELLS) the chain is Extracellular. A glycan (N-linked (GlcNAc...) asparagine) is linked at Asn-354. A helical transmembrane segment spans residues 364–390 (FLLVLDYIGINMASLNSCINPIALYLV). Topologically, residues 391-443 (SKRFKNCFKSCLCCWCQSFEEKQSLEEKQSCLKFKANDHGYDNFRSSNKYSSS) are cytoplasmic. S-palmitoyl cysteine attachment occurs at residues Cys-403, Cys-404, and Cys-406. A Phosphoserine modification is found at Ser-420. Tyr-440 is subject to Phosphotyrosine. 3 positions are modified to phosphoserine: Ser-441, Ser-442, and Ser-443.

Belongs to the G-protein coupled receptor 1 family. Endothelin receptor subfamily. EDNRB sub-subfamily.

The protein localises to the cell membrane. In terms of biological role, non-specific receptor for endothelin 1, 2, and 3. Mediates its action by association with G proteins that activate a phosphatidylinositol-calcium second messenger system. The protein is Endothelin receptor type B (EDNRB) of Sus scrofa (Pig).